The primary structure comprises 78 residues: Large ribosomal subunit protein bL28 (78 aa).

Belongs to the bacterial ribosomal protein bL28 family.

This is Large ribosomal subunit protein bL28 from Tropheryma whipplei (strain TW08/27) (Whipple's bacillus).